A 613-amino-acid polypeptide reads, in one-letter code: Cilia- and flagella-associated protein 100 (613 aa).

The tract at residues 36–55 (KSKESKKNKGNVTISDRSSN) is disordered. Positions 45–55 (GNVTISDRSSN) are enriched in polar residues. Coiled-coil stretches lie at residues 167–198 (ALAMKRNEIQRLEMLATREENRLERAEKFLEK), 233–260 (VEIRELTAQITSIKSEISKFEDTLKHYK), 396–435 (FTKLEEENLSLIQNTQEMEETLDELNVTLKNTQIRMDKEV), and 504–580 (GTVQ…RGRK).

The protein belongs to the CFAP100 family.

The protein localises to the cytoplasm. It is found in the cytoskeleton. It localises to the cilium axoneme. In terms of biological role, may play a role in ciliary/flagellar motility by regulating the assembly and the activity of axonemal inner dynein arm. This chain is Cilia- and flagella-associated protein 100, found in Mus musculus (Mouse).